Reading from the N-terminus, the 53-residue chain is UPF0391 membrane protein ETA_06630 (53 aa).

2 helical membrane-spanning segments follow: residues 4 to 24 and 27 to 47; these read WGII…GGLA and AAWA…ISLF.

It belongs to the UPF0391 family.

Its subcellular location is the cell membrane. This is UPF0391 membrane protein ETA_06630 from Erwinia tasmaniensis (strain DSM 17950 / CFBP 7177 / CIP 109463 / NCPPB 4357 / Et1/99).